The sequence spans 210 residues: T-cell surface glycoprotein CD8 beta chain (210 aa).

An N-terminal signal peptide occupies residues 1 to 21 (MRPRLWLLLAAQLAVLHGSSV). The 111-residue stretch at 22-132 (LQQTPAYIKV…ELTFGKGTQL (111 aa)) folds into the Ig-like V-type domain. Residues 22–170 (LQQTPAYIKV…ETQKGPLCSP (149 aa)) are Extracellular-facing. An intrachain disulfide couples cysteine 41 to cysteine 116. Asparagine 102 carries N-linked (GlcNAc...) asparagine glycosylation. The helical transmembrane segment at 171 to 191 (ITLGLLVAGVLVLLVSLGVAI) threads the bilayer. The Cytoplasmic portion of the chain corresponds to 192-210 (HLCCRRRRARLRFMKQFYK).

Forms disulfide-linked heterodimers with CD8A at the cell surface. Interacts with CD3D; this interaction couples TCR-CD3 with CD8. Interacts with LCK. In terms of processing, phosphorylated as a consequence of T-cell activation. Palmitoylated at the cytoplasmic tail and thereby targets the heterodimer CD8A/CD8B to lipid rafts unlike CD8A homodimers.

The protein localises to the cell membrane. Its function is as follows. Integral membrane glycoprotein that plays an essential role in the immune response and serves multiple functions in responses against both external and internal offenses. In T-cells, functions primarily as a coreceptor for MHC class I molecule:peptide complex. The antigens presented by class I peptides are derived from cytosolic proteins while class II derived from extracellular proteins. Interacts simultaneously with the T-cell receptor (TCR) and the MHC class I proteins presented by antigen presenting cells (APCs). In turn, recruits the Src kinase LCK to the vicinity of the TCR-CD3 complex. A palmitoylation site in the cytoplasmic tail of CD8B chain contributes to partitioning of CD8 into the plasma membrane lipid rafts where signaling proteins are enriched. Once LCK recruited, it initiates different intracellular signaling pathways by phosphorylating various substrates ultimately leading to lymphokine production, motility, adhesion and activation of cytotoxic T-lymphocytes (CTLs). Additionally, plays a critical role in thymic selection of CD8+ T-cells. The polypeptide is T-cell surface glycoprotein CD8 beta chain (CD8B) (Pongo pygmaeus (Bornean orangutan)).